The primary structure comprises 113 residues: RING-box protein 2 (113 aa).

The tract at residues 1–26 (MADVEDGEEPCVLSSHSGSAGSKSGG) is disordered. Ala2 carries the post-translational modification N-acetylalanine. The Zn(2+) site is built by Cys50, Cys53, Cys61, Cys64, Cys73, Cys80, His82, His85, Cys87, Cys88, Cys99, and Cys102. Residues 61–103 (CLRCQAENKQEDCVVVWGECNHSFHNCCMSLWVKQNNRCPLCQ) form an RING-type zinc finger.

The protein belongs to the RING-box family. Catalytic component of multiple cullin-5-RING E3 ubiquitin-protein ligase complexes (ECS complexes, also named CRL5 complexes) composed of CUL5, Elongin BC (ELOB and ELOC), RNF7/RBX2 and a variable SOCS box domain-containing protein as substrate-specific recognition component. Also interacts (with lower preference) with CUL1, CUL2, CUL3, CUL4A and CUL4B; additional evidence is however required to confirm this result in vivo. Interacts with UBE2F. Interacts with CSNK2B, the interaction is not affected by phosphorylation by CK2. May also interact with DCUN1D1, DCUN1D2, DCUN1D3, DCUN1D4 and DCUN1D5.

It localises to the cytoplasm. Its subcellular location is the nucleus. The catalysed reaction is S-ubiquitinyl-[E2 ubiquitin-conjugating enzyme]-L-cysteine + [acceptor protein]-L-lysine = [E2 ubiquitin-conjugating enzyme]-L-cysteine + N(6)-ubiquitinyl-[acceptor protein]-L-lysine.. It catalyses the reaction S-[NEDD8-protein]-yl-[E2 NEDD8-conjugating enzyme]-L-cysteine + [cullin]-L-lysine = [E2 NEDD8-conjugating enzyme]-L-cysteine + N(6)-[NEDD8-protein]-yl-[cullin]-L-lysine.. It functions in the pathway protein modification; protein ubiquitination. Its pathway is protein modification; protein neddylation. Its function is as follows. Catalytic component of multiple cullin-5-RING E3 ubiquitin-protein ligase complexes (ECS complexes), which mediate the ubiquitination and subsequent proteasomal degradation of target proteins. It is thereby involved in various biological processes, such as cell cycle progression, signal transduction and transcription. The functional specificity of the E3 ubiquitin-protein ligase ECS complexes depend on the variable SOCS box-containing substrate recognition component. Within ECS complexes, RNF7/RBX2 recruits the E2 ubiquitination enzyme to the complex via its RING-type and brings it into close proximity to the substrate. Catalytic subunit of various SOCS-containing ECS complexes, such as the ECS(SOCS7) complex, that regulate reelin signaling by mediating ubiquitination and degradation of DAB1. The ECS(SOCS2) complex mediates the ubiquitination and subsequent proteasomal degradation of phosphorylated EPOR and GHR. Promotes ubiquitination and degradation of NF1, thereby regulating Ras protein signal transduction. As part of the ECS(ASB9) complex, catalyzes ubiquitination and degradation of CKB. The ECS(SPSB3) complex catalyzes ubiquitination of nuclear CGAS. As part of the ECS(RAB40C) complex, mediates ANKRD28 ubiquitination and degradation, thereby inhibiting protein phosphatase 6 (PP6) complex activity and focal adhesion assembly during cell migration. As part of some ECS complex, catalyzes 'Lys-11'-linked ubiquitination and degradation of BTRC. ECS complexes and ARIH2 collaborate in tandem to mediate ubiquitination of target proteins; ARIH2 mediating addition of the first ubiquitin on CRLs targets. Specifically catalyzes the neddylation of CUL5 via its interaction with UBE2F. Does not catalyze neddylation of other cullins (CUL1, CUL2, CUL3, CUL4A or CUL4B). May play a role in protecting cells from apoptosis induced by redox agents. This is RING-box protein 2 from Mus musculus (Mouse).